A 702-amino-acid chain; its full sequence is MNSLFASTARGLEELLKTELEKLGAVGCQVVQGGVHFQGDTRLIYQSLMWSRLASRIILPMGECKVYSDLDLYLGVQAINWTEIFNPGATFAVHFSGLNDTIRNSQYGAMKVKDAIVDAFTRKNLPRPNVDRESPDLRINVWLNKETASIALDLSGDGLHLRGYRDRTGLAPIKETLAAAIVMRSGWQPGTPLLDPMCGSGTLLIEAAMWATDRAPGLHRGHWGFSGWAQHDETIWQEVKAEAQTRARKGLAEYSSHFYGSDSDARVIERARSNARRAGIGELITFEVKDVAQLSNPLPKGPYGTVISNPPYGERLDSEPALIALHSLLGRTMKNQFGGWNLSLFSASPDLLGSLQLRADKQFKAKNGPLDCVQKNYHIAETTADSKPATVAEDYANRLRKNLKKLEKWARQEGIECYRLYDADLPEYNVAVDRYGDWAVIQEYAPPKTVDAQKARQRLFDIIAATLSVLGIPPNKLVLKTRERQKGKNQYQKMSEKGEFLEVSEYNARLWVNLTDYLDTGLFLDHRIARRMLGEMSKGKDFLNLFSYTGSASVHAGLGGARSTTTVDMSRTYLEWAERNLRLNGLSGRAHRLIQADCLGWLREANEQFDLIFIDPPTFSNSKRMEESFDVQRDHVALMKDLKRLLRKGGTIMFSNNKRGFRMDLEGLAELGLTAQEITQKTLSPDFARNRQIHNCWLIRAA.

Residues 43 to 154 (LIYQSLMWSR…KETASIALDL (112 aa)) enclose the THUMP domain.

The protein belongs to the methyltransferase superfamily. RlmKL family.

It is found in the cytoplasm. The catalysed reaction is guanosine(2445) in 23S rRNA + S-adenosyl-L-methionine = N(2)-methylguanosine(2445) in 23S rRNA + S-adenosyl-L-homocysteine + H(+). It catalyses the reaction guanosine(2069) in 23S rRNA + S-adenosyl-L-methionine = N(2)-methylguanosine(2069) in 23S rRNA + S-adenosyl-L-homocysteine + H(+). Functionally, specifically methylates the guanine in position 2445 (m2G2445) and the guanine in position 2069 (m7G2069) of 23S rRNA. The protein is Ribosomal RNA large subunit methyltransferase K/L of Salmonella agona (strain SL483).